We begin with the raw amino-acid sequence, 59 residues long: Putative potassium channel toxin Ts25 (59 aa).

The first 22 residues, methionine 1–glutamine 22, serve as a signal peptide directing secretion. 3 disulfide bridges follow: cysteine 29-cysteine 50, cysteine 35-cysteine 55, and cysteine 39-cysteine 57.

Belongs to the short scorpion toxin superfamily. Potassium channel inhibitor family. Alpha-KTx 04 subfamily. As to expression, expressed by the venom gland.

It is found in the secreted. Functionally, potently blocks Kv1.1/KCNA1 (85%), Kv1.2/KCNA2 (91%), Kv1.3/KCNA3 (89%), Kv1.6/KCNA6 (94%), and Shaker (97%). The protein is Putative potassium channel toxin Ts25 of Tityus serrulatus (Brazilian scorpion).